Consider the following 186-residue polypeptide: Tumor necrosis factor alpha-induced protein 8-like protein 2 (186 aa).

It belongs to the TNFAIP8 family. TNFAIP8L2 subfamily.

Its function is as follows. Acts as a negative regulator of innate and adaptive immunity by maintaining immune homeostasis. Negative regulator of Toll-like receptor and T-cell receptor function. Prevents hyperresponsiveness of the immune system and maintains immune homeostasis. Inhibits jun/ap1 and NF-kappa-B activation. Promotes Fas-induced apoptosis. In Xenopus tropicalis (Western clawed frog), this protein is Tumor necrosis factor alpha-induced protein 8-like protein 2 (tnfaip8l2).